Here is a 341-residue protein sequence, read N- to C-terminus: uncharacterized protein (341 aa).

Positions 125–146 are disordered; it reads DTVKHNGSGPRPEQASSHVHYS.

It belongs to the cycloisomerase 2 family.

This is an uncharacterized protein from Lactococcus lactis subsp. cremoris (strain MG1363).